The chain runs to 432 residues: Adenylosuccinate synthetase (432 aa).

GTP contacts are provided by residues 13-19 (GDEGKGK) and 41-43 (GHT). The active-site Proton acceptor is D14. Mg(2+) contacts are provided by D14 and G41. Residues 14-17 (DEGK), 39-42 (NAGH), T130, R144, Q225, T240, and R304 each bind IMP. The active-site Proton donor is the H42. Substrate is bound at residue 300 to 306 (STTGRPR). GTP-binding positions include R306, 332 to 334 (KLD), and 416 to 418 (STG).

It belongs to the adenylosuccinate synthetase family. As to quaternary structure, homodimer. It depends on Mg(2+) as a cofactor.

Its subcellular location is the cytoplasm. It carries out the reaction IMP + L-aspartate + GTP = N(6)-(1,2-dicarboxyethyl)-AMP + GDP + phosphate + 2 H(+). It participates in purine metabolism; AMP biosynthesis via de novo pathway; AMP from IMP: step 1/2. Plays an important role in the de novo pathway of purine nucleotide biosynthesis. Catalyzes the first committed step in the biosynthesis of AMP from IMP. The polypeptide is Adenylosuccinate synthetase (Nitrosomonas eutropha (strain DSM 101675 / C91 / Nm57)).